A 365-amino-acid chain; its full sequence is tRNA/tmRNA (uracil-C(5))-methyltransferase (365 aa).

The S-adenosyl-L-methionine site is built by Gln-189, Tyr-217, Asn-222, Glu-238, and Asp-298. The Nucleophile role is filled by Cys-323. The active-site Proton acceptor is Glu-357.

Belongs to the class I-like SAM-binding methyltransferase superfamily. RNA M5U methyltransferase family. TrmA subfamily.

It carries out the reaction uridine(54) in tRNA + S-adenosyl-L-methionine = 5-methyluridine(54) in tRNA + S-adenosyl-L-homocysteine + H(+). The enzyme catalyses uridine(341) in tmRNA + S-adenosyl-L-methionine = 5-methyluridine(341) in tmRNA + S-adenosyl-L-homocysteine + H(+). Its function is as follows. Dual-specificity methyltransferase that catalyzes the formation of 5-methyluridine at position 54 (m5U54) in all tRNAs, and that of position 341 (m5U341) in tmRNA (transfer-mRNA). In Shewanella loihica (strain ATCC BAA-1088 / PV-4), this protein is tRNA/tmRNA (uracil-C(5))-methyltransferase.